The chain runs to 375 residues: Growth/differentiation factor 8 (375 aa).

The N-terminal stretch at Met1 to Leu23 is a signal peptide. A propeptide spanning residues Asp24–Arg266 is cleaved from the precursor. Residue Asn71 is glycosylated (N-linked (GlcNAc...) asparagine). Disulfide bonds link Cys272-Cys282, Cys281-Cys340, Cys309-Cys372, and Cys313-Cys374.

This sequence belongs to the TGF-beta family. Homodimer; disulfide-linked.

The protein localises to the secreted. In terms of biological role, acts specifically as a negative regulator of skeletal muscle growth. In Gallus gallus (Chicken), this protein is Growth/differentiation factor 8 (MSTN).